The primary structure comprises 175 residues: NADH-ubiquinone oxidoreductase chain 6 (175 aa).

5 helical membrane-spanning segments follow: residues 1-21, 25-45, 47-67, 88-108, and 149-169; these read MMTYIVFILSIIFVISFVGFS, SPIYGGLVLIISGAVGCGIVL, FGGSFLGLMVFLIYLGGMLVV, AVLGAFVMGLLSELLLACYIL, and YGTWLVIVTGWSLFIGVLVIM.

Belongs to the complex I subunit 6 family. Core subunit of respiratory chain NADH dehydrogenase (Complex I) which is composed of 45 different subunits.

It localises to the mitochondrion inner membrane. It carries out the reaction a ubiquinone + NADH + 5 H(+)(in) = a ubiquinol + NAD(+) + 4 H(+)(out). Core subunit of the mitochondrial membrane respiratory chain NADH dehydrogenase (Complex I) which catalyzes electron transfer from NADH through the respiratory chain, using ubiquinone as an electron acceptor. Essential for the catalytic activity and assembly of complex I. The chain is NADH-ubiquinone oxidoreductase chain 6 (MT-ND6) from Halichoerus grypus (Gray seal).